The sequence spans 620 residues: Sodium-dependent dopamine transporter (620 aa).

Residues 1–56 (MSKSKCSVGLMSSVVAPAKEPNAMGPKEVELILVKEQNGVQLTSSTLTNPRQSPVE) lie on the Cytoplasmic side of the membrane. Residues 57-95 (AQDRETWGKKIDFLLSVIGFAVDLANVWRFPYLCYKNGG) form a discontinuously helical membrane-spanning segment. Residues glycine 75, alanine 77, valine 78, aspartate 79, and asparagine 82 each coordinate Na(+). Position 79 (aspartate 79) interacts with dopamine. The next 2 helical transmembrane spans lie at 96 to 127 (GAFL…NREG) and 128 to 171 (AAGV…FSSF). Residues serine 149 and glycine 153 each contribute to the dopamine site. Over 172–236 (TTELPWIHCN…SHGIDDLGPP (65 aa)) the chain is Extracellular. Cysteine 180 and cysteine 189 form a disulfide bridge. Asparagine 181, asparagine 188, and asparagine 205 each carry an N-linked (GlcNAc...) asparagine glycan. A run of 2 helical transmembrane segments spans residues 237-256 (RWQL…FSLW) and 257-287 (KGVK…GVTL). The Extracellular portion of the chain corresponds to 288-306 (PGAIDGIRAYLSVDFYRLC). The discontinuously helical transmembrane segment at 307 to 335 (EASVWIDAATQVCFSLGVGFGVLIAFSSY) threads the bilayer. Glutamine 317 is a binding site for chloride. Phenylalanine 320 contributes to the dopamine binding site. Serine 321 and asparagine 353 together coordinate Na(+). Position 321 (serine 321) interacts with chloride. A helical membrane pass occupies residues 336 to 376 (NKFTNNCYRDAIVTTSINSLTSFSSGFVVFSFLGYMAQKHS). A chloride-binding site is contributed by serine 357. Topologically, residues 377–400 (VPIGDVAKDGPGLIFIIYPEAIAT) are extracellular. A run of 3 helical transmembrane segments spans residues 401–442 (LPLS…QLLH), 443–466 (RHRE…CVTN), and 467–499 (GGIY…AWFY). 3 residues coordinate Na(+): leucine 418, aspartate 421, and serine 422. Dopamine contacts are provided by serine 422 and alanine 423. Topologically, residues 500 to 516 (GVGQFSDDIQQMTGQRP) are cytoplasmic. Residues 517 to 542 (SLYWRLCWKLVSPCFLLFVVVVSIVT) form a helical membrane-spanning segment. Over 543 to 553 (FRPPHYGAYIF) the chain is Extracellular. The chain crosses the membrane as a helical span at residues 554-583 (PDWANALGWVIATSSMAMVPIYAAYKFCSL). Positions 561 to 590 (GWVIATSSMAMVPIYAAYKFCSLPGSFREK) are interaction with TGFB1I1. Topologically, residues 584–620 (PGSFREKLAYAIAPEKDRELVDRGEVRQFTLRHWLKV) are cytoplasmic.

Belongs to the sodium:neurotransmitter symporter (SNF) (TC 2.A.22) family. SLC6A3 subfamily. In terms of assembly, monomer. Homooligomer; disulfide-linked. Interacts with PRKCABP and TGFB1I1. Interacts (via N-terminus) with SYNGR3 (via N-terminus). Interacts with SLC18A2. Interacts with TOR1A (ATP-bound); TOR1A regulates SLC6A3 subcellular location. Interacts with alpha-synuclein/SNCA. Interacts with SEPTIN4.

The protein localises to the cell membrane. Its subcellular location is the cell projection. It is found in the neuron projection. The protein resides in the axon. The catalysed reaction is dopamine(out) + chloride(out) + Na(+)(out) = dopamine(in) + chloride(in) + Na(+)(in). It catalyses the reaction (R)-noradrenaline(out) + chloride(out) + Na(+)(out) = (R)-noradrenaline(in) + chloride(in) + Na(+)(in). The enzyme catalyses dopamine(out) + chloride(out) + 2 Na(+)(out) = dopamine(in) + chloride(in) + 2 Na(+)(in). With respect to regulation, inhibited by zinc ions. Its function is as follows. Mediates sodium- and chloride-dependent transport of dopamine. Also mediates sodium- and chloride-dependent transport of norepinephrine (also known as noradrenaline). Regulator of light-dependent retinal hyaloid vessel regression, downstream of OPN5 signaling. In Macaca fascicularis (Crab-eating macaque), this protein is Sodium-dependent dopamine transporter (SLC6A3).